The following is a 417-amino-acid chain: Secernin-3 (417 aa).

A propeptide spanning residues Met1–Ser5 is cleaved from the precursor. Cys6 is an active-site residue. Cys6 carries the post-translational modification Glyoxylic acid (Cys); alternate. Cys6 is subject to Pyruvic acid (Cys); alternate.

It belongs to the peptidase C69 family. Secernin subfamily.

Plays a role in thermal nociception. This chain is Secernin-3 (scrn3), found in Danio rerio (Zebrafish).